Here is a 331-residue protein sequence, read N- to C-terminus: Ketol-acid reductoisomerase (NADP(+)) (331 aa).

The KARI N-terminal Rossmann domain occupies 2–182 (AKMYYDSDCN…GAGRAGILET (181 aa)). Residues 25-28 (YGSQ), Ser-51, and 83-86 (DEKQ) contribute to the NADP(+) site. Residue His-108 is part of the active site. NADP(+) is bound at residue Gly-134. The KARI C-terminal knotted domain occupies 183-329 (TFREETETDL…AELRKMMSWL (147 aa)). 4 residues coordinate Mg(2+): Asp-191, Glu-195, Glu-227, and Glu-231. Residue Ser-252 participates in substrate binding.

Belongs to the ketol-acid reductoisomerase family. Mg(2+) serves as cofactor.

The catalysed reaction is (2R)-2,3-dihydroxy-3-methylbutanoate + NADP(+) = (2S)-2-acetolactate + NADPH + H(+). The enzyme catalyses (2R,3R)-2,3-dihydroxy-3-methylpentanoate + NADP(+) = (S)-2-ethyl-2-hydroxy-3-oxobutanoate + NADPH + H(+). Its pathway is amino-acid biosynthesis; L-isoleucine biosynthesis; L-isoleucine from 2-oxobutanoate: step 2/4. It functions in the pathway amino-acid biosynthesis; L-valine biosynthesis; L-valine from pyruvate: step 2/4. In terms of biological role, involved in the biosynthesis of branched-chain amino acids (BCAA). Catalyzes an alkyl-migration followed by a ketol-acid reduction of (S)-2-acetolactate (S2AL) to yield (R)-2,3-dihydroxy-isovalerate. In the isomerase reaction, S2AL is rearranged via a Mg-dependent methyl migration to produce 3-hydroxy-3-methyl-2-ketobutyrate (HMKB). In the reductase reaction, this 2-ketoacid undergoes a metal-dependent reduction by NADPH to yield (R)-2,3-dihydroxy-isovalerate. The chain is Ketol-acid reductoisomerase (NADP(+)) from Ruminiclostridium cellulolyticum (strain ATCC 35319 / DSM 5812 / JCM 6584 / H10) (Clostridium cellulolyticum).